The sequence spans 183 residues: uncharacterized protein (183 aa).

This sequence belongs to the asfivirus S183L family.

This is an uncharacterized protein from Ornithodoros (relapsing fever ticks).